We begin with the raw amino-acid sequence, 137 residues long: uncharacterized protein (137 aa).

In terms of domain architecture, Ubiquitin-like spans 58-135; sequence VHVVAKTVRP…EVNLQMFLMN (78 aa).

It is found in the cytoplasm. The protein resides in the nucleus. This is an uncharacterized protein from Schizosaccharomyces pombe (strain 972 / ATCC 24843) (Fission yeast).